We begin with the raw amino-acid sequence, 615 residues long: Pre-hexon-linking protein IIIa (615 aa).

Positions 1–92 (MDPGLKPSSS…DLLIRVHKYN (92 aa)) are peripentonal hexon-tethering domain. The segment at 124 to 238 (SNQVILNDFL…FTNENTFTPD (115 aa)) is binding to hexon-linking protein. Ser212 bears the Phosphoserine; by host mark. At Thr262 the chain carries Phosphothreonine; by host. Residues 400–409 (EREALEEAGP) are compositionally biased toward basic and acidic residues. Disordered stretches follow at residues 400-473 (EREA…SVDS) and 528-615 (GERI…NGLK). Low complexity-rich tracts occupy residues 419–430 (PSSSPQSSKIQS) and 451–460 (SVRSAPPSVS). Phosphoserine; by host is present on Ser451. The segment covering 539–548 (RAEIERRRIA) has biased composition (basic and acidic residues). The span at 557–570 (PSLSSESSAPSLSS) shows a compositional bias: low complexity. A propeptide spanning residues 602–615 (GNPFDYLRPRNGLK) is cleaved from the precursor.

The protein belongs to the adenoviridae hexon-linking protein IIIa family. Interacts with hexon proteins; this interaction tethers the peripentonal hexons to hexons situated in the facet. Interacts with the penton protein (via N-terminus). Interacts with packaging protein 3; this interaction is required to promote correct genome packaging. Post-translationally, cleaved near the C-terminus by the viral protease during virion maturation to form the mature protein.

Its subcellular location is the virion. It localises to the host nucleus. Its function is as follows. Structural component of the virion that acts as a cement protein on the capsid exterior which mediates the interactions between the hexons, including the peripentonal hexons, and reaches all the way to the penton vertices. Two hexon linking proteins IIIa, one from each facet, stabilize the unique edge interface between a pair of facets. As the virus enters the host cell, hexon linking proteins IIIa are shed concomitant with virion acidification in the endosome. During virus assembly, seems to play a role in the serotype specificity of the packaging of viral DNA via its interaction with packaging protein 3. The polypeptide is Pre-hexon-linking protein IIIa (Snake adenovirus serotype 1 (SnAdV-1)).